The chain runs to 200 residues: 3-isopropylmalate dehydratase small subunit (200 aa).

Belongs to the LeuD family. LeuD type 1 subfamily. Heterodimer of LeuC and LeuD.

The catalysed reaction is (2R,3S)-3-isopropylmalate = (2S)-2-isopropylmalate. Its pathway is amino-acid biosynthesis; L-leucine biosynthesis; L-leucine from 3-methyl-2-oxobutanoate: step 2/4. Functionally, catalyzes the isomerization between 2-isopropylmalate and 3-isopropylmalate, via the formation of 2-isopropylmaleate. In Edwardsiella ictaluri (strain 93-146), this protein is 3-isopropylmalate dehydratase small subunit.